The following is a 474-amino-acid chain: Equilibrative nucleoside transporter 3 (474 aa).

The Cytoplasmic portion of the chain corresponds to Met-1 to Thr-53. Ser-21 and Ser-23 each carry phosphoserine. Residues Leu-31 to Leu-32 carry the Dileucine internalization motif motif. The chain crosses the membrane as a helical span at residues Tyr-54–Ala-74. The Extracellular segment spans residues Gln-75–Ser-105. N-linked (GlcNAc...) asparagine glycosylation is present at Asn-84. The chain crosses the membrane as a helical span at residues Tyr-106–Val-126. Residues Asn-127 to Arg-134 lie on the Cytoplasmic side of the membrane. Residues Val-135 to Val-155 traverse the membrane as a helical segment. The Extracellular segment spans residues Asp-156–Thr-161. Residues His-162–Phe-182 traverse the membrane as a helical segment. The Cytoplasmic portion of the chain corresponds to Asn-183–Leu-201. The chain crosses the membrane as a helical span at residues Ile-202–Val-222. The Extracellular portion of the chain corresponds to Ala-223–Thr-230. Residues Leu-231–Leu-251 form a helical membrane-spanning segment. At Pro-252–Thr-305 the chain is on the cytoplasmic side. The segment at Glu-272–Thr-294 is disordered. A compositionally biased stretch (polar residues) spans Pro-276–Pro-292. The chain crosses the membrane as a helical span at residues Gly-306–Cys-326. Residues Thr-327–Pro-339 lie on the Extracellular side of the membrane. Residues Trp-340–Ala-357 traverse the membrane as a helical segment. Over Asp-358–Lys-376 the chain is Cytoplasmic. Residues Ala-377 to Tyr-397 traverse the membrane as a helical segment. Topologically, residues Gln-398–Pro-414 are extracellular. The helical transmembrane segment at Val-415 to Tyr-435 threads the bilayer. The Cytoplasmic segment spans residues Gly-436 to Thr-453. A helical membrane pass occupies residues Phe-454–Ile-474.

The protein belongs to the SLC29A/ENT transporter (TC 2.A.57) family.

Its subcellular location is the lysosome membrane. The protein localises to the late endosome membrane. It localises to the mitochondrion membrane. It is found in the cell membrane. It carries out the reaction adenosine(in) = adenosine(out). The catalysed reaction is guanosine(in) = guanosine(out). The enzyme catalyses inosine(in) = inosine(out). It catalyses the reaction uridine(out) = uridine(in). It carries out the reaction cytidine(in) = cytidine(out). The catalysed reaction is thymidine(in) = thymidine(out). The enzyme catalyses 2'-deoxyadenosine(in) = 2'-deoxyadenosine(out). It catalyses the reaction 2'-deoxycytidine(in) = 2'-deoxycytidine(out). It carries out the reaction guanine(out) = guanine(in). The catalysed reaction is uracil(in) = uracil(out). The enzyme catalyses (R)-noradrenaline(out) = (R)-noradrenaline(in). It catalyses the reaction dopamine(out) = dopamine(in). It carries out the reaction serotonin(out) = serotonin(in). The catalysed reaction is tyramine(in) = tyramine(out). The enzyme catalyses ATP(in) = ATP(out). Functionally, uniporter that mediates the facilitative transport of nucleoside across lysosomal and mitochondrial membranes. Functions as a non-electrogenic Na(+)-independent transporter. Substrate transport is pH-dependent and enhanced under acidic condition, probably reflecting the location of the transporter in acidic intracellular compartments. Proton is not a cotransporting ion but most likely change the ionization state of the transporter which dictates transport-permissible/impermissible conformation for nucleoside translocation. May direct the nucleoside transport from lysosomes to cytosol or cytosol to mitochondria to facilitate the fundamental function of salvage synthesis of nucleic acids. Involved in the transport of nucleosides (adenosine, guanosine, uridine, thymidine, cytidine and inosine) and deoxynucleosides (deoxyadenosine, deoxycytidine). Also mediates transport of purine nucleobases (adenine, guanine) and pyrimidine nucleobases (uracil). Also able to transport monoamine neurotransmitters dopamine, serotonin, noradrenaline and tyramine. Capable of transporting ATP. Mediates nucleoside export from lysosomes in macrophages, which regulates macrophage functions and numbers. This chain is Equilibrative nucleoside transporter 3 (SLC29A3), found in Bos taurus (Bovine).